A 384-amino-acid chain; its full sequence is Chorismate synthase (384 aa).

NADP(+) is bound by residues Arg39 and Arg45. FMN-binding positions include Arg130–Ser132, Asn248–Ala249, Gly292, Lys307–Thr311, and Arg333.

It belongs to the chorismate synthase family. Homotetramer. FMNH2 serves as cofactor.

The enzyme catalyses 5-O-(1-carboxyvinyl)-3-phosphoshikimate = chorismate + phosphate. The protein operates within metabolic intermediate biosynthesis; chorismate biosynthesis; chorismate from D-erythrose 4-phosphate and phosphoenolpyruvate: step 7/7. In terms of biological role, catalyzes the anti-1,4-elimination of the C-3 phosphate and the C-6 proR hydrogen from 5-enolpyruvylshikimate-3-phosphate (EPSP) to yield chorismate, which is the branch point compound that serves as the starting substrate for the three terminal pathways of aromatic amino acid biosynthesis. This reaction introduces a second double bond into the aromatic ring system. This chain is Chorismate synthase, found in Exiguobacterium sibiricum (strain DSM 17290 / CCUG 55495 / CIP 109462 / JCM 13490 / 255-15).